A 171-amino-acid polypeptide reads, in one-letter code: 6,7-dimethyl-8-ribityllumazine synthase (171 aa).

5-amino-6-(D-ribitylamino)uracil-binding positions include Phe24, 58–60, and 82–84; these read ALE and AVI. Position 87–88 (87–88) interacts with (2S)-2-hydroxy-3-oxobutyl phosphate; the sequence is ET. The active-site Proton donor is His90. Residue Asn115 coordinates 5-amino-6-(D-ribitylamino)uracil. Arg129 provides a ligand contact to (2S)-2-hydroxy-3-oxobutyl phosphate. The segment at 150-171 is disordered; the sequence is ALDQLGDDEDEEEDEDDEEERA. The segment covering 154–171 has biased composition (acidic residues); sequence LGDDEDEEEDEDDEEERA.

Belongs to the DMRL synthase family.

It carries out the reaction (2S)-2-hydroxy-3-oxobutyl phosphate + 5-amino-6-(D-ribitylamino)uracil = 6,7-dimethyl-8-(1-D-ribityl)lumazine + phosphate + 2 H2O + H(+). Its pathway is cofactor biosynthesis; riboflavin biosynthesis; riboflavin from 2-hydroxy-3-oxobutyl phosphate and 5-amino-6-(D-ribitylamino)uracil: step 1/2. In terms of biological role, catalyzes the formation of 6,7-dimethyl-8-ribityllumazine by condensation of 5-amino-6-(D-ribitylamino)uracil with 3,4-dihydroxy-2-butanone 4-phosphate. This is the penultimate step in the biosynthesis of riboflavin. The protein is 6,7-dimethyl-8-ribityllumazine synthase of Burkholderia cenocepacia (strain HI2424).